Here is a 233-residue protein sequence, read N- to C-terminus: tRNA (guanine-N(7)-)-methyltransferase (233 aa).

Residues 1–22 are disordered; it reads MIDENHPMRAAGNFFGRRHGKP. Residues glutamate 64, glutamate 89, aspartate 116, and aspartate 138 each coordinate S-adenosyl-L-methionine. Aspartate 138 is a catalytic residue. Substrate contacts are provided by residues lysine 142, aspartate 174, and 212–215; that span reads TRYE.

This sequence belongs to the class I-like SAM-binding methyltransferase superfamily. TrmB family.

It catalyses the reaction guanosine(46) in tRNA + S-adenosyl-L-methionine = N(7)-methylguanosine(46) in tRNA + S-adenosyl-L-homocysteine. The protein operates within tRNA modification; N(7)-methylguanine-tRNA biosynthesis. Catalyzes the formation of N(7)-methylguanine at position 46 (m7G46) in tRNA. In Brucella abortus (strain 2308), this protein is tRNA (guanine-N(7)-)-methyltransferase.